The following is a 93-amino-acid chain: UPF0358 protein YlaN (93 aa).

It belongs to the UPF0358 family.

In terms of biological role, essential for cell growth and for normal cell shape. The polypeptide is UPF0358 protein YlaN (ylaN) (Bacillus subtilis (strain 168)).